The sequence spans 843 residues: DNA gyrase subunit A (843 aa).

One can recognise a Topo IIA-type catalytic domain in the interval 61–528; sequence LPDVRDGLKP…ESSTFNAEDL (468 aa). Tyr149 acts as the O-(5'-phospho-DNA)-tyrosine intermediate in catalysis. Residues 555–561 carry the GyrA-box motif; it reads QKRGGKG.

This sequence belongs to the type II topoisomerase GyrA/ParC subunit family. As to quaternary structure, heterotetramer, composed of two GyrA and two GyrB chains. In the heterotetramer, GyrA contains the active site tyrosine that forms a transient covalent intermediate with DNA, while GyrB binds cofactors and catalyzes ATP hydrolysis.

The protein resides in the cytoplasm. The enzyme catalyses ATP-dependent breakage, passage and rejoining of double-stranded DNA.. A type II topoisomerase that negatively supercoils closed circular double-stranded (ds) DNA in an ATP-dependent manner to modulate DNA topology and maintain chromosomes in an underwound state. Negative supercoiling favors strand separation, and DNA replication, transcription, recombination and repair, all of which involve strand separation. Also able to catalyze the interconversion of other topological isomers of dsDNA rings, including catenanes and knotted rings. Type II topoisomerases break and join 2 DNA strands simultaneously in an ATP-dependent manner. The polypeptide is DNA gyrase subunit A (Leptospira biflexa serovar Patoc (strain Patoc 1 / Ames)).